The sequence spans 247 residues: MVTTTAENEVLTSTSAVTGLPQKRYYRQRAHSNPIADHCFDYPARPEDVDWRSLYPSIRADQEVSFADIGCGYGGFLVTLGELFPEKISIGMEIRVKVSDYVLDRITALRQKSSGTGAYQNIACLRTNAMKYLPNYFRKGQLEKMFFLYPDPHFKRAKHKWRIINQALLSEYAYVLRKGGLVYTMTDVEDLHNWIVTHMDEHPLYERLDEEEANTDPITPKLYQSSEEGAKVVRNKGDHFLAIFRRL.

Residues Gly-70, Glu-93 to Ile-94, Asn-128 to Ala-129, and Leu-148 contribute to the S-adenosyl-L-methionine site. Residue Asp-151 is part of the active site. Residue Ser-226–Glu-228 participates in S-adenosyl-L-methionine binding.

This sequence belongs to the class I-like SAM-binding methyltransferase superfamily. TrmB family.

The protein resides in the nucleus. The catalysed reaction is guanosine(46) in tRNA + S-adenosyl-L-methionine = N(7)-methylguanosine(46) in tRNA + S-adenosyl-L-homocysteine. It participates in tRNA modification; N(7)-methylguanine-tRNA biosynthesis. Functionally, catalyzes the formation of N(7)-methylguanine at position 46 (m7G46) in tRNA. The sequence is that of tRNA (guanine-N(7)-)-methyltransferase from Drosophila pseudoobscura pseudoobscura (Fruit fly).